Reading from the N-terminus, the 2457-residue chain is Large tegument protein deneddylase (2457 aa).

Positions 1-234 (MALPASLAGF…SDLHGSKIIL (234 aa)) are deubiquitination activity. The Peptidase C76 domain maps to 13 to 224 (EGTASTNQAD…IMSHYKVISF (212 aa)). Residues cysteine 33, aspartate 163, and histidine 165 contribute to the active site. Disordered regions lie at residues 281-350 (EEWT…LPSV), 2064-2131 (ITEG…PIIP), 2164-2360 (GHSG…PQPQ), and 2387-2407 (GMSD…GVTH). The span at 293-302 (SGRTPPEKMT) shows a compositional bias: basic and acidic residues. Residues 314–334 (TMDDDVIDLTGDDDMEDESEG) are compositionally biased toward acidic residues. Positions 2080–2091 (TQDHMEEPDNKQ) are enriched in basic and acidic residues. Pro residues predominate over residues 2115–2131 (SPSPSPPVLTPIKPIIP). Residues 2173 to 2186 (HIQSSTPGPAQNTR) show a composition bias toward polar residues. The segment covering 2387-2398 (GMSDDKNPEPCV) has biased composition (basic and acidic residues).

It belongs to the herpesviridae large tegument protein family. As to quaternary structure, interacts with host CUL1 and CUL4A; these interactions inhibit the E3 ligase activity of cullins. Interacts with inner tegument protein. Interacts with capsid vertex specific component CVC2. Interacts with the major capsid protein/MCP.

Its subcellular location is the virion tegument. It localises to the host cytoplasm. It is found in the host nucleus. It catalyses the reaction Thiol-dependent hydrolysis of ester, thioester, amide, peptide and isopeptide bonds formed by the C-terminal Gly of ubiquitin (a 76-residue protein attached to proteins as an intracellular targeting signal).. Functionally, large tegument protein that plays multiple roles in the viral cycle. During viral entry, remains associated with the capsid while most of the tegument is detached and participates in the capsid transport toward the host nucleus. Plays a role in the routing of the capsid at the nuclear pore complex and subsequent uncoating. Within the host nucleus, acts as a deneddylase and promotes the degradation of nuclear CRLs (cullin-RING ubiquitin ligases) and thereby stabilizes nuclear CRL substrates, while cytoplasmic CRLs remain unaffected. These modifications prevent host cell cycle S-phase progression and create a favorable environment allowing efficient viral genome replication. Participates later in the secondary envelopment of capsids. Indeed, plays a linker role for the association of the outer viral tegument to the capsids together with the inner tegument protein. This chain is Large tegument protein deneddylase, found in Apodemus sylvaticus (European woodmouse).